Reading from the N-terminus, the 471-residue chain is MIPTLALVGRPNVGKSTLFNRLTRSRDAIVANFSGLTRDRQYGEATHGDKRFIVVDTGGISGEEEGIDSYMAGQSLQAIEEADMVAFIVDARVGLTAADMQIAQHLRTCNKPIFLLANKVDGVNESIVCAPFFELGLGDVIGIAAAHGRNINTMLDTVLENVEPEAEASEEDKAKGIKLAIVGRPNVGKSTLVNRMLGEDRVVVYDMPGTTRDSIYIEYERDGKAYTIIDTAGVRRRKNIKLSVEKFSIVKTLQAIDDANVVILVMDAQEGIVDQDLHLMGHVIDSGRALVVALNKWDNLDNDHKSYVKTELSRRLQFVDFADLHFISALHGTGVGDLYKSVHKAYSSATEKLNTNFLTKILEFAVSQHQPPLVNGRRIKLRYAHAGGQNPPIIVIHGNQTAAVPKNYVRYLEKIFRKELELHGTPIRFEFKSSENPFAGRKNAMSKKPEHPSRRANSGGKSINRRPRPKS.

2 consecutive EngA-type G domains span residues P3 to A166 and I177 to T350. GTP-binding positions include G9–S16, D56–I60, N118–D121, G183–S190, D230–V234, and N295–D298. A KH-like domain is found at E351–E435. Positions K432–S471 are disordered.

Belongs to the TRAFAC class TrmE-Era-EngA-EngB-Septin-like GTPase superfamily. EngA (Der) GTPase family. In terms of assembly, associates with the 50S ribosomal subunit.

Functionally, GTPase that plays an essential role in the late steps of ribosome biogenesis. The polypeptide is GTPase Der (Saccharophagus degradans (strain 2-40 / ATCC 43961 / DSM 17024)).